The chain runs to 176 residues: MSRVGKSPIALQGAEVKLADGSITVKGPLGTITQAVNPLVNVANNDGTLNLSPVDDSREANALSGTMRAIIANMVQGVTKGFERKLTLVGVGYRAQAQGDKLNLSLGFSHPVVHQMPEGIKAETPTQTEIVIKGIDKQKVGQVAAEVRGYRPPEPYKGKGVRYADEVVILKETKKK.

This sequence belongs to the universal ribosomal protein uL6 family. Part of the 50S ribosomal subunit.

This protein binds to the 23S rRNA, and is important in its secondary structure. It is located near the subunit interface in the base of the L7/L12 stalk, and near the tRNA binding site of the peptidyltransferase center. In Burkholderia thailandensis (strain ATCC 700388 / DSM 13276 / CCUG 48851 / CIP 106301 / E264), this protein is Large ribosomal subunit protein uL6.